A 66-amino-acid polypeptide reads, in one-letter code: Large ribosomal subunit protein bL35 (66 aa).

This sequence belongs to the bacterial ribosomal protein bL35 family.

The sequence is that of Large ribosomal subunit protein bL35 from Azorhizobium caulinodans (strain ATCC 43989 / DSM 5975 / JCM 20966 / LMG 6465 / NBRC 14845 / NCIMB 13405 / ORS 571).